A 597-amino-acid chain; its full sequence is Bromodomain-containing protein 9 (597 aa).

Residues 1–10 are compositionally biased toward basic residues; the sequence is MGKKHKKHKA. Disordered regions lie at residues 1-25 and 38-138; these read MGKK…KPLE and EVTE…ENES. Composition is skewed to basic and acidic residues over residues 11–25 and 50–62; these read EWRS…KPLE and SYYD…ERER. Ser56 is subject to Phosphoserine. The segment covering 63 to 73 has biased composition (basic residues); sequence HKEKKKKKKKK. Positions 74–85 are enriched in basic and acidic residues; that stretch reads SEKEKHLDDEER. Positions 86–97 are enriched in basic residues; the sequence is RKRKEEKKRKRE. Residues 111-126 show a composition bias toward basic and acidic residues; that stretch reads DPGKKVEVEPPPDRPV. Residues 136 to 240 enclose the Bromo domain; sequence NESTPIQQLL…HAGFKMMSKQ (105 aa). The interval 214–216 is histone H4K5ac H4K8ac and histone H4K5bu H4K8bu binding; that stretch reads TYN. An N6-acetyllysine; alternate modification is found at Lys373. A Glycyl lysine isopeptide (Lys-Gly) (interchain with G-Cter in SUMO2); alternate cross-link involves residue Lys373. The segment at 536-597 is disordered; that stretch reads EAQAERGGSR…SPEPAASAKT (62 aa). The span at 544–556 shows a compositional bias: low complexity; it reads SRPSSNLSSLSNA. Residues Ser566 and Ser588 each carry the phosphoserine modification.

As to quaternary structure, binds acetylated histones H3 and H4. Binds butyrylated histone H4. Component of the multiprotein chromatin-remodeling subcomplex SWI/SNF called GBAF, which includes at least BICRA or BICRAL (mutually exclusive), BRD9, SS18, the core BAF subunits, SMARCA2/BRM, SMARCA4/BRG1/BAF190A, ACTL6A/BAF53, SMARCC1/BAF155, and SMARCD1/BAF60A. Interacts (via N-terminal bromodomain) with acetylated RAD54. Interacts (via C-terminus) with RAD51.

It is found in the nucleus. Functionally, plays a role in chromatin remodeling and regulation of transcription. Acts as a chromatin reader that recognizes and binds acylated histones: binds histones that are acetylated and/or butyrylated. Component of SWI/SNF chromatin remodeling subcomplex GBAF that carries out key enzymatic activities, changing chromatin structure by altering DNA-histone contacts within a nucleosome in an ATP-dependent manner. Also orchestrates the RAD51-RAD54 complex formation and thereby plays a role in homologous recombination (HR). In Homo sapiens (Human), this protein is Bromodomain-containing protein 9 (BRD9).